The chain runs to 316 residues: Inactive peptidyl-prolyl cis-trans isomerase FKBP6 (316 aa).

The region spanning 43–132 is the PPIase FKBP-type domain; it reads DASVLVKYSG…LFEIELLDFL (90 aa). 3 TPR repeats span residues 160-193, 208-241, and 242-275; these read AATE…LHRR, LLVL…DQKN, and AKAL…QPFN.

This sequence belongs to the FKBP6 family. In terms of assembly, interacts with HSP72/HSPA2 and CLTC. Interacts with GAPDH; leading to inhibit GAPDH catalytic activity. Interacts (via TPR repeats) with HSP90. In terms of tissue distribution, specifically expressed in testis and sperm.

It is found in the cytoplasm. The protein localises to the cytosol. It localises to the nucleus. Functionally, co-chaperone required during spermatogenesis to repress transposable elements and prevent their mobilization, which is essential for the germline integrity. Acts via the piRNA metabolic process, which mediates the repression of transposable elements during meiosis by forming complexes composed of piRNAs and Piwi proteins and govern the methylation and subsequent repression of transposons. Acts as a co-chaperone via its interaction with HSP90 and is required for the piRNA amplification process, the secondary piRNA biogenesis. May be required together with HSP90 in removal of 16 nucleotide ping-pong by-products from Piwi complexes, possibly facilitating turnover of Piwi complexes. The sequence is that of Inactive peptidyl-prolyl cis-trans isomerase FKBP6 (FKBP6) from Equus caballus (Horse).